Here is a 356-residue protein sequence, read N- to C-terminus: D-xylulose reductase (356 aa).

Residues Cys-44, His-69, and Glu-155 each coordinate Zn(2+). 179 to 184 (GAGPIG) contributes to the NAD(+) binding site.

This sequence belongs to the zinc-containing alcohol dehydrogenase family. Zn(2+) serves as cofactor.

It catalyses the reaction xylitol + NAD(+) = D-xylulose + NADH + H(+). It participates in carbohydrate degradation; L-arabinose degradation via L-arabinitol; D-xylulose 5-phosphate from L-arabinose (fungal route): step 4/5. In Saccharomyces cerevisiae (strain ATCC 204508 / S288c) (Baker's yeast), this protein is D-xylulose reductase (XYL2).